A 180-amino-acid chain; its full sequence is Large ribosomal subunit protein uL6c (180 aa).

It belongs to the universal ribosomal protein uL6 family. In terms of assembly, part of the 50S ribosomal subunit.

The protein localises to the plastid. Its subcellular location is the chloroplast. In terms of biological role, binds 23S rRNA. In Porphyra purpurea (Red seaweed), this protein is Large ribosomal subunit protein uL6c (rpl6).